Consider the following 577-residue polypeptide: MVQCTLIWAGIGAMMAVSGALLGWVVFPRAVHEKVIEATELRQGTDQYKRWEALPQPLDFKVYIFNVTNPYEVMQGRRPKVVEVGPYVYFQYRQKDNVRFSRDRSKVHFSQQQMYVFDAESSYPLTENDELTVLNMHMNSILQIIDNQAKETITNFRSDVNNTLEKIPVVRVIKRIIERTTPIQSILQLAEDETYDSLRLINVELNRIFGRPDTMFLRTTPKQFLFDGVPFCVNVIGIAKAICKEIEKRNTKTIRTMPDGSLRFSFFSHKNMTDDGMFTINTGIKDPSRTQMIELWNGRTTLDVWNNRSSGLSSSCNKIHGTDGSGYPPFRTGVERMTIFSTDICRTVDIKLTGSSSYEGIPALRYEIDNNFLHEIGPEYGNDCYCVNKIPKSIVKSNGCLYKGALDLSNCFDAPVVLTLPHMLGVAEEYTALIDGMDPEPERHQIFVDVEPYTGTPLNGGKRVQFNMFLRRIDAIKLTDRLQPTLFPVIWIDEGIALNEDMVKLIDDSLMKVLSLLDVVQWVLIGVGLLLAVLMPTVYFVKRCRGEGSRTVSPAVTATTSAASLSTVAGVTGDRSK.

Residues 1–6 (MVQCTL) are Cytoplasmic-facing. Residues 7–27 (IWAGIGAMMAVSGALLGWVVF) traverse the membrane as a helical segment. The Extracellular portion of the chain corresponds to 28–519 (PRAVHEKVIE…LMKVLSLLDV (492 aa)). Residues N66, N161, N271, and N307 are each glycosylated (N-linked (GlcNAc...) asparagine). 3 disulfides stabilise this stretch: C316–C384, C345–C411, and C386–C400. A helical membrane pass occupies residues 520–540 (VQWVLIGVGLLLAVLMPTVYF). Residues 541–577 (VKRCRGEGSRTVSPAVTATTSAASLSTVAGVTGDRSK) lie on the Cytoplasmic side of the membrane.

Belongs to the CD36 family.

The protein localises to the cell membrane. Functionally, plays an olfactory role that is not restricted to pheromone sensitivity. The protein is Sensory neuron membrane protein 2 of Anopheles gambiae (African malaria mosquito).